The sequence spans 910 residues: DNA mismatch repair protein MutS (910 aa).

ATP is bound at residue 615 to 622; that stretch reads GPNMAGKS.

The protein belongs to the DNA mismatch repair MutS family.

In terms of biological role, this protein is involved in the repair of mismatches in DNA. It is possible that it carries out the mismatch recognition step. This protein has a weak ATPase activity. The polypeptide is DNA mismatch repair protein MutS (Clostridium perfringens (strain ATCC 13124 / DSM 756 / JCM 1290 / NCIMB 6125 / NCTC 8237 / Type A)).